Reading from the N-terminus, the 969-residue chain is Endogenous retrovirus group K member 11 Pol protein (969 aa).

The Reverse transcriptase domain maps to 57 to 245; it reads LEKGHIEPSF…TPFHYLGMQI (189 aa). The short motif at 161-164 is the LPQG element; it reads LPQG. Residues 460–590 form the RNase H type-1 domain; the sequence is LENALTVFTD…ADLLVSSALI (131 aa). Asp-469, Glu-497, Asp-517, and Asp-582 together coordinate Mg(2+). The segment at 587–628 adopts an Integrase-type zinc-finger fold; that stretch reads SALIKAQELHALTHVNAAGLKNKFDVTWKQAKDIVQHCTQCQ. Zn(2+) is bound by residues His-596, His-600, Cys-624, and Cys-627. The 162-residue stretch at 642 to 803 folds into the Integrase catalytic domain; it reads RGLCPNALWQ…TSAEQHLTGK (162 aa). A DNA-binding region (integrase-type) is located at residues 811–859; it reads KLIWWKDNKNKTWEIGKVITWGRGFACVSPGENQLPVWIPTRHLKFYNE.

This sequence belongs to the beta type-B retroviral polymerase family. HERV class-II K(HML-2) pol subfamily.

The enzyme catalyses DNA(n) + a 2'-deoxyribonucleoside 5'-triphosphate = DNA(n+1) + diphosphate. It carries out the reaction Endonucleolytic cleavage to 5'-phosphomonoester.. In terms of biological role, early post-infection, the reverse transcriptase converts the viral RNA genome into double-stranded viral DNA. The RNase H domain of the reverse transcriptase performs two functions. It degrades the RNA template and specifically removes the RNA primer from the RNA/DNA hybrid. Following nuclear import, the integrase catalyzes the insertion of the linear, double-stranded viral DNA into the host cell chromosome. Endogenous Pol proteins may have kept, lost or modified their original function during evolution. This chain is Endogenous retrovirus group K member 11 Pol protein (ERVK-11), found in Homo sapiens (Human).